Consider the following 603-residue polypeptide: Pyruvate decarboxylase 4 (603 aa).

2 residues coordinate substrate: D65 and H152. The thiamine pyrophosphate binding stretch occupies residues 430-512 (DSWFNCQKLK…FLINNGGYTI (83 aa)). Mg(2+)-binding residues include D480, N507, and G509. E513 provides a ligand contact to substrate.

This sequence belongs to the TPP enzyme family. Homotetramer. A metal cation serves as cofactor. Requires thiamine diphosphate as cofactor. In terms of tissue distribution, expressed in shoots and at lowe levels in roots, flowers and siliques.

It carries out the reaction a 2-oxocarboxylate + H(+) = an aldehyde + CO2. In Arabidopsis thaliana (Mouse-ear cress), this protein is Pyruvate decarboxylase 4 (PDC4).